The chain runs to 716 residues: DNA replication licensing factor MCM7 (716 aa).

A C4-type zinc finger spans residues C178 to C205. The MCM domain maps to I326–H531. Residue G376–S383 coordinates ATP. Positions S508–D511 match the Arginine finger motif.

Belongs to the MCM family. In terms of assembly, component of the minichromosome maintenance (MCM) complex, a heterotetramer composed of MCM2, MCM3, MCM4, MCM5, MCM6 and MCM7. Interacts with ETG1. Expressed in shoot apex and flower buds.

It localises to the nucleus. The protein resides in the cytoplasm. The catalysed reaction is ATP + H2O = ADP + phosphate + H(+). Its function is as follows. Probable component of the MCM2-7 complex (MCM complex) that may function as a DNA helicase and which is essential to undergo a single round of replication initiation and elongation per cell cycle in eukaryotic cells. Required for megagametophyte and embryo development. This Arabidopsis thaliana (Mouse-ear cress) protein is DNA replication licensing factor MCM7 (MCM7).